Consider the following 110-residue polypeptide: Protein mistic (110 aa).

Over 1–7 (MFCTFFE) the chain is Cytoplasmic. Residues 8 to 22 (KHHRKWDILLEKSTG) traverse the membrane as a helical segment. Topologically, residues 23–31 (VMEAMKVTS) are extracellular. The chain crosses the membrane as a helical span at residues 32–55 (EEKEQLSTAIDRMNEGLDAFIQLY). Residues 56 to 66 (NESEIDEPLIQ) lie on the Cytoplasmic side of the membrane. A helical transmembrane segment spans residues 67–81 (LDDDTAELMKQARDM). Residues 82 to 88 (YGQEKLN) lie on the Extracellular side of the membrane. A helical membrane pass occupies residues 89–102 (EKLNTIIKQILSIS). Residues 103-110 (VSEEGEKE) lie on the Cytoplasmic side of the membrane.

In terms of assembly, monomer.

It is found in the cell membrane. Its function is as follows. Chaperone that facilitates the production and integration of integral membrane proteins into the bacterial lipid bilayer. In Bacillus subtilis (strain 168), this protein is Protein mistic (mstX).